Here is a 241-residue protein sequence, read N- to C-terminus: Proteasome subunit alpha (241 aa).

The protein belongs to the peptidase T1A family. The 20S proteasome core is composed of 14 alpha and 14 beta subunits that assemble into four stacked heptameric rings, resulting in a barrel-shaped structure. The two inner rings, each composed of seven catalytic beta subunits, are sandwiched by two outer rings, each composed of seven alpha subunits. The catalytic chamber with the active sites is on the inside of the barrel. Has a gated structure, the ends of the cylinder being occluded by the N-termini of the alpha-subunits. Is capped by the proteasome-associated ATPase, ARC.

It is found in the cytoplasm. Its pathway is protein degradation; proteasomal Pup-dependent pathway. Its activity is regulated as follows. The formation of the proteasomal ATPase ARC-20S proteasome complex, likely via the docking of the C-termini of ARC into the intersubunit pockets in the alpha-rings, may trigger opening of the gate for substrate entry. Interconversion between the open-gate and close-gate conformations leads to a dynamic regulation of the 20S proteasome proteolysis activity. Component of the proteasome core, a large protease complex with broad specificity involved in protein degradation. This Parafrankia sp. (strain EAN1pec) protein is Proteasome subunit alpha.